The sequence spans 211 residues: Urease accessory protein UreF (211 aa).

The protein belongs to the UreF family. In terms of assembly, ureD, UreF and UreG form a complex that acts as a GTP-hydrolysis-dependent molecular chaperone, activating the urease apoprotein by helping to assemble the nickel containing metallocenter of UreC. The UreE protein probably delivers the nickel.

Its subcellular location is the cytoplasm. Required for maturation of urease via the functional incorporation of the urease nickel metallocenter. This chain is Urease accessory protein UreF, found in Mycobacterium sp. (strain JLS).